Consider the following 337-residue polypeptide: Glutaminase-asparaginase (337 aa).

The Asparaginase/glutaminase domain occupies 10 to 337 (ANVVILATGG…KELQRIFWEY (328 aa)). Residue threonine 20 is the Acyl-ester intermediate of the active site. Residues serine 67 and 100-101 (TD) contribute to the substrate site.

Belongs to the asparaginase 1 family. Homotetramer.

It is found in the periplasm. The catalysed reaction is L-glutamine + H2O = L-glutamate + NH4(+). It catalyses the reaction L-asparagine + H2O = L-aspartate + NH4(+). The sequence is that of Glutaminase-asparaginase (ansB) from Pseudomonas sp. (strain ATCC 29598 / 7A).